A 71-amino-acid chain; its full sequence is Sec-independent protein translocase protein TatA (71 aa).

The helical transmembrane segment at 1–21 threads the bilayer; that stretch reads MGSFSMGHWLIVLAIIVLLFG. A compositionally biased stretch (basic and acidic residues) spans 41 to 57; the sequence is KEMEDETPVEKIEKADS. The disordered stretch occupies residues 41 to 71; it reads KEMEDETPVEKIEKADSETQSTKQNETTKNV. Polar residues predominate over residues 58–71; that stretch reads ETQSTKQNETTKNV.

This sequence belongs to the TatA/E family. The Tat system comprises two distinct complexes: a TatABC complex, containing multiple copies of TatA, TatB and TatC subunits, and a separate TatA complex, containing only TatA subunits. Substrates initially bind to the TatABC complex, which probably triggers association of the separate TatA complex to form the active translocon.

The protein resides in the cell inner membrane. Part of the twin-arginine translocation (Tat) system that transports large folded proteins containing a characteristic twin-arginine motif in their signal peptide across membranes. TatA could form the protein-conducting channel of the Tat system. The protein is Sec-independent protein translocase protein TatA of Campylobacter fetus subsp. fetus (strain 82-40).